Reading from the N-terminus, the 320-residue chain is Glyoxylate/hydroxypyruvate reductase B (320 aa).

Catalysis depends on residues Arg233 and Glu262. The active-site Proton donor is the His281.

The protein belongs to the D-isomer specific 2-hydroxyacid dehydrogenase family. GhrB subfamily. Homodimer.

It is found in the cytoplasm. It catalyses the reaction glycolate + NADP(+) = glyoxylate + NADPH + H(+). The catalysed reaction is (R)-glycerate + NAD(+) = 3-hydroxypyruvate + NADH + H(+). It carries out the reaction (R)-glycerate + NADP(+) = 3-hydroxypyruvate + NADPH + H(+). Functionally, catalyzes the NADPH-dependent reduction of glyoxylate and hydroxypyruvate into glycolate and glycerate, respectively. The chain is Glyoxylate/hydroxypyruvate reductase B from Pectobacterium atrosepticum (strain SCRI 1043 / ATCC BAA-672) (Erwinia carotovora subsp. atroseptica).